The primary structure comprises 132 residues: Small ribosomal subunit protein uS8c (132 aa).

Belongs to the universal ribosomal protein uS8 family. As to quaternary structure, part of the 30S ribosomal subunit.

Its subcellular location is the plastid. It localises to the chloroplast. Its function is as follows. One of the primary rRNA binding proteins, it binds directly to 16S rRNA central domain where it helps coordinate assembly of the platform of the 30S subunit. The chain is Small ribosomal subunit protein uS8c (rps8) from Rhodomonas salina (Cryptomonas salina).